Here is a 595-residue protein sequence, read N- to C-terminus: Laccase-18 (595 aa).

The N-terminal stretch at 1-29 (MEKLSTAASLFCVVVAATALAMAVVGGEA) is a signal peptide. Plastocyanin-like domains are found at residues 37 to 153 (MVHE…PRNG) and 162 to 316 (KDVP…YAGA). Asparagine 42 and asparagine 48 each carry an N-linked (GlcNAc...) asparagine glycan. Cu cation-binding residues include histidine 87 and histidine 89. An N-linked (GlcNAc...) asparagine glycan is attached at asparagine 121. Histidine 132 and histidine 134 together coordinate Cu cation. 7 N-linked (GlcNAc...) asparagine glycosylation sites follow: asparagine 206, asparagine 345, asparagine 382, asparagine 402, asparagine 409, asparagine 439, and asparagine 470. The Plastocyanin-like 3 domain occupies 429–571 (DFPVRPPRPF…ATAFIVEDGP (143 aa)). Positions 488, 491, 493, 550, 551, 552, 556, and 561 each coordinate Cu cation. The tract at residues 570–595 (GPTPETSLPPPPPEFKRCGTNGLSQP) is disordered.

It belongs to the multicopper oxidase family. Cu cation serves as cofactor.

It is found in the secreted. The protein localises to the extracellular space. It localises to the apoplast. It catalyses the reaction 4 hydroquinone + O2 = 4 benzosemiquinone + 2 H2O. Functionally, lignin degradation and detoxification of lignin-derived products. The chain is Laccase-18 (LAC18) from Oryza sativa subsp. japonica (Rice).